A 907-amino-acid chain; its full sequence is Probable dipeptidyl-aminopeptidase B (907 aa).

The segment covering 1 to 11 (MYDQVPYRDTD) has biased composition (basic and acidic residues). The tract at residues 1-71 (MYDQVPYRDT…RGKPDEDDDL (71 aa)) is disordered. Over 1–88 (MYDQVPYRDT…LKPMERKVRR (88 aa)) the chain is Cytoplasmic. Residues 22-36 (SDSNRSSIDTTSTTS) show a composition bias toward low complexity. The chain crosses the membrane as a helical; Signal-anchor for type II membrane protein span at residues 89-109 (AMYLLAFLMIGGWFLALAVYV). At 110-907 (SREHFGTPDT…PLRKRNRELV (798 aa)) the chain is on the vacuolar side. N-linked (GlcNAc...) asparagine glycans are attached at residues Asn185 and Asn341. Ser746 functions as the Charge relay system in the catalytic mechanism. A glycan (N-linked (GlcNAc...) asparagine) is linked at Asn800. Catalysis depends on charge relay system residues Asp823 and His856.

This sequence belongs to the peptidase S9B family.

It localises to the vacuole membrane. The catalysed reaction is Release of an N-terminal dipeptide, Xaa-Yaa-|-Zaa-, from a polypeptide, preferentially when Yaa is Pro, provided Zaa is neither Pro nor hydroxyproline.. Its function is as follows. Type IV dipeptidyl-peptidase which removes N-terminal dipeptides sequentially from polypeptides having unsubstituted N-termini provided that the penultimate residue is proline. The protein is Probable dipeptidyl-aminopeptidase B (DAPB) of Tuber melanosporum (strain Mel28) (Perigord black truffle).